The chain runs to 615 residues: Pentatricopeptide repeat-containing protein At2g25580 (615 aa).

Residues 40–98 are disordered; it reads FGNSNDSSEMNPREGYNGRIQNRTGSSGEVSESIHTQSQSLGSNQGRNEQSWKQSPSLS. Polar residues predominate over residues 58–98; the sequence is RIQNRTGSSGEVSESIHTQSQSLGSNQGRNEQSWKQSPSLS. PPR repeat units lie at residues 288–318, 319–353, 354–389, and 390–420; these read DLSSNHVLLEMYSNCGLANEAASVFEKMSEK, NLETWCIIIRCFAKNGFGEDAIDMFSRFKEEGNIP, DGQLFRGIFYACGMLGDVDEGLLHFESMSRDYGIAP, and SIEDYVSLVEMYALPGFLDEALEFVERMPME. The interval 490-520 is type E(+) motif; sequence SSMQEFRAGDTNLPENDELFQLLRNLKMHMV. A type DYW motif region spans residues 521-615; sequence EVGYVAETRM…NGACTCKDYW (95 aa).

The protein belongs to the PPR family. PCMP-H subfamily.

The chain is Pentatricopeptide repeat-containing protein At2g25580 (PCMP-H75) from Arabidopsis thaliana (Mouse-ear cress).